Consider the following 1682-residue polypeptide: Sodium channel protein type 7 subunit alpha (1682 aa).

The Cytoplasmic portion of the chain corresponds to 1-117 (MLASPEPKGL…RRTTIKVLVH (117 aa)). The I repeat unit spans residues 100–401 (TLSPFNCIRR…ILAMAYEEEK (302 aa)). A helical transmembrane segment spans residues 118–137 (PFFQLFILISVLIDCVFMSL). Over 138 to 141 (TNLP) the chain is Extracellular. A helical membrane pass occupies residues 142 to 167 (KWRPVLENTLLGIYTFEILVKLFARG). The Cytoplasmic segment spans residues 168–178 (VWAGSFSFLGD). Residues 179-196 (PWNWLDFSVTVFEVIIRY) form a helical membrane-spanning segment. Topologically, residues 197–200 (SPLD) are extracellular. The helical transmembrane segment at 201–219 (FIPTLQTARTLRILKIIPL) threads the bilayer. The Cytoplasmic segment spans residues 220 to 237 (NQGLKSLVGVLIHCLKQL). The chain crosses the membrane as a helical span at residues 238–259 (IGVIILTLFFLSIFSLIGMGLF). At 260-338 (MGNLKHKCFR…PDQGFTNFDS (79 aa)) the chain is on the extracellular side. Cysteine 267 and cysteine 307 are joined by a disulfide. Residues asparagine 276, asparagine 281, and asparagine 309 are each glycosylated (N-linked (GlcNAc...) asparagine). The pore-forming intramembrane region spans 339–366 (FGWALFALFRLMAQDYPEVLYHQILYAS). Residue glycine 367 is a topological domain, extracellular. The chain crosses the membrane as a helical span at residues 368–407 (KVYMIFFVVVSFLFSFYMASLFLGILAMAYEEEKQRVGEI). The Cytoplasmic segment spans residues 408–505 (SKKIEPKFQQ…EFVHRIIMAP (98 aa)). Serine 442 is subject to Phosphoserine; by PKA. One copy of the II repeat lies at 487–758 (CSPCWLKLKE…QLAVARIKKG (272 aa)). Residues 506–521 (FTDLFLIICIILNVCF) form a helical membrane-spanning segment. Topologically, residues 522–530 (LTLEHYPMS) are extracellular. A helical membrane pass occupies residues 531–559 (KQTNTLLNIGNLVFIGIFTAEMIFKIIAM). Over 560-568 (HPYGYFQVG) the chain is Cytoplasmic. Residues 569-586 (WNIFDSMIVFHGLIELCL) form a helical membrane-spanning segment. Residues 587-592 (ANVAGM) lie on the Extracellular side of the membrane. Residues 593–609 (ALLRLFRMLRIFKLGKY) form a helical membrane-spanning segment. Topologically, residues 610–626 (WPTFQILMWSLSNSWVA) are cytoplasmic. The helical transmembrane segment at 627 to 655 (LKDLVLLLFTFIFFSAAFGMKLFGKNYEE) threads the bilayer. Residues 656–673 (FVCHIDKDCQLPRWHMHD) lie on the Extracellular side of the membrane. 2 disulfides stabilise this stretch: cysteine 658–cysteine 664 and cysteine 696–cysteine 705. The pore-forming intramembrane region spans 674–700 (FFHSFLNVFRILCGEWVETLWDCMEVA). A topological domain (extracellular) is located at residue glycine 701. Residues 702 to 732 (QSWCIPFYLMVILIGNLLVLYLFLALVSSFS) traverse the membrane as a helical segment. The Cytoplasmic portion of the chain corresponds to 733 to 934 (SCKDVTAEEN…KTCCKIVENN (202 aa)). Threonine 777 carries the phosphothreonine; by PKA modification. Residues 801 to 871 (TQDFLKDKEK…SKEKIKQSSS (71 aa)) are disordered. Residues 804–819 (FLKDKEKSSGTEKNAT) show a composition bias toward basic and acidic residues. Residues 820-834 (ENESQSLIPSPSVSE) are compositionally biased toward polar residues. Serine 843 bears the Phosphoserine mark. Phosphoserine; by PKA occurs at positions 869 and 905. One copy of the III repeat lies at 916–1224 (KGKIWQNIRK…RKQYRRLKKL (309 aa)). A helical transmembrane segment spans residues 935–953 (WFKCFIGLVTLLSTGTLAF). The Extracellular segment spans residues 954–961 (EDIYMDQR). Residues 962–990 (KTIKILLEYADMIFTYIFILEMLLKWMAY) form a helical membrane-spanning segment. At 991–998 (GFKAYFSN) the chain is on the cytoplasmic side. The helical transmembrane segment at 999-1020 (GWYRLDFVVVIVFCLSLIGKTR) threads the bilayer. Glutamate 1021 is a topological domain (extracellular). A helical transmembrane segment spans residues 1022–1040 (ELKPLISMKFLRPLRVLSQ). Topologically, residues 1041–1055 (FERMKVVVRALIKTT) are cytoplasmic. The chain crosses the membrane as a helical span at residues 1056 to 1080 (LPTLNVFLVCLMIWLIFSIMGVDLF). The Extracellular segment spans residues 1081–1127 (AGRFYECIDPTSGERFPSSEVMNKSRCESLLFNESMLWENAKMNFDN). Residues cysteine 1087 and cysteine 1107 are joined by a disulfide bond. 2 N-linked (GlcNAc...) asparagine glycosylation sites follow: asparagine 1103 and asparagine 1113. The segment at residues 1128 to 1154 (VGNGFLSLLQVATFNGWITIMNSAIDS) is an intramembrane region (pore-forming). The Extracellular portion of the chain corresponds to 1155–1167 (VAVNIQPHFEVNI). Residues 1168-1202 (YMYCYFINFIIFGVFLPLSMLITVIIDNFNKHKIK) traverse the membrane as a helical segment. Residues 1203–1250 (LGGSNIFITVKQRKQYRRLKKLMYEDSQRPVPRPLNKLQGFIFDVVTS) lie on the Cytoplasmic side of the membrane. Residues 1233-1531 (VPRPLNKLQG…WKRFDPDRTQ (299 aa)) form an IV repeat. Residues 1251–1272 (QAFNVIVMVLICFQAIAMMIDT) traverse the membrane as a helical segment. At 1273 to 1276 (DVQS) the chain is on the extracellular side. The helical transmembrane segment at 1277–1305 (LQMSIALYWINSIFVMLYTMECILKLIAF) threads the bilayer. Residues 1306 to 1312 (RCFYFTI) lie on the Cytoplasmic side of the membrane. A helical membrane pass occupies residues 1313–1338 (AWNIFDFMVVIFSITGLCLPMTVGSY). Residues 1339–1341 (LVP) are Extracellular-facing. A helical membrane pass occupies residues 1342–1362 (PSLVQLILLSRIIHMLRLGKG). Topologically, residues 1363 to 1377 (PKVFHNLMLPLMLSL) are cytoplasmic. Residues 1378–1402 (PALLNIILLIFLVMFIYAVFGMYNF) form a helical membrane-spanning segment. Topologically, residues 1403–1420 (AYVKKEAGINDVSNFETF) are extracellular. Residues 1421 to 1444 (GNSMLCLFQVAIFAGWDGMLDAIF) constitute an intramembrane region (pore-forming). Residues 1445–1468 (NSKWSDCDPDKINPGTQVRGDCGN) are Extracellular-facing. Cysteine 1451 and cysteine 1466 form a disulfide bridge. The chain crosses the membrane as a helical span at residues 1469–1504 (PSVGIFYFVSYILISWLIIVNMYIVVVMEFLNIASK). The Cytoplasmic segment spans residues 1505–1682 (KKNKTLSEDD…KEKSPIQSQI (178 aa)).

The protein belongs to the sodium channel (TC 1.A.1.10) family. SCN7A subfamily. As to quaternary structure, the sodium channel formed by SCN7A is probably a heterooligomeric complex consisting of the ion conducting pore forming alpha subunit SCN7A and regulatory beta subunits such as SCN3B. Interacts with ATP1A1; activates ATP1A1 and thereby indirectly signals to nearby neurons to regulate sodium homeostasis. As to expression, heart and uterus.

The protein localises to the cell membrane. The enzyme catalyses Na(+)(in) = Na(+)(out). Sodium leak channel functioning as an osmosensor regulating sodium ion levels in various tissues and organs. While most sodium channels are voltage-gated, SCN7A is not and lets sodium flow through membrane along its concentration gradient. In glial cells of the central nervous system, senses body-fluid sodium levels and controls salt intake behavior as well as voluntary water intake through activation of nearby neurons to maintain appropriate sodium levels in the body. By mediating sodium influx into keratinocytes, also plays a role in skin barrier homeostasis. This is Sodium channel protein type 7 subunit alpha from Homo sapiens (Human).